Here is a 556-residue protein sequence, read N- to C-terminus: TNF receptor-associated factor 6-A (556 aa).

The RING-type; degenerate zinc finger occupies 72 to 111; it reads CPICLMALREAVQTPCGHRFCKACILKSLRNAGHKCPVDN. 2 TRAF-type zinc fingers span residues 148–204 and 205–261; these read RHLE…EDKS and GHEL…HNLA. The MATH domain occupies 384–533; that stretch reads NGVFIWRIKG…NDTLLVRCSV (150 aa).

This sequence belongs to the TNF receptor-associated factor family. A subfamily. As to quaternary structure, homotrimer. Homooligomer. Interacts with tifa. In terms of tissue distribution, highly expressed in ovary and moderately expressed in kidney, spleen, stomach, colon and testis.

It is found in the cytoplasm. The protein resides in the cell cortex. It localises to the nucleus. Its subcellular location is the lipid droplet. The catalysed reaction is S-ubiquitinyl-[E2 ubiquitin-conjugating enzyme]-L-cysteine + [acceptor protein]-L-lysine = [E2 ubiquitin-conjugating enzyme]-L-cysteine + N(6)-ubiquitinyl-[acceptor protein]-L-lysine.. Its pathway is protein modification; protein ubiquitination. Functionally, E3 ubiquitin ligase that, together with UBE2N and UBE2V1, mediates the synthesis of 'Lys-63'-linked-polyubiquitin chains conjugated to proteins, such as IKBKG, IRAK1, AKT1 and AKT2. Also mediates ubiquitination of free/unanchored polyubiquitin chain that leads to MAP3K7 activation. This chain is TNF receptor-associated factor 6-A (traf6-a), found in Xenopus laevis (African clawed frog).